A 482-amino-acid polypeptide reads, in one-letter code: Pre-glycoprotein polyprotein GP complex (482 aa).

The N-myristoyl glycine; by host moiety is linked to residue G2. The Extracellular portion of the chain corresponds to 2–17 (GQFISFMQEIPIFLQE). The helical transmembrane segment at 18-32 (ALNIALVAVSLICIV) threads the bilayer. A topological domain (cytoplasmic) is located at residue K33. The helical transmembrane segment at 34 to 53 (GLVNLYRCGLFQLMVFLVLA) threads the bilayer. Extracellular-facing segments span residues 54 to 58 (GRSCS) and 59 to 421 (EETF…TLVD). C57 is a binding site for Zn(2+). N83 and N95 each carry an N-linked (GlcNAc...) asparagine; by host glycan. 5 cysteine pairs are disulfide-bonded: C92-C224, C134-C162, C205-C211, C269-C282, and C353-C374. N-linked (GlcNAc...) asparagine; by host glycosylation is found at N164 and N176. 4 N-linked (GlcNAc...) asparagine; by host glycosylation sites follow: N354, N362, N379, and N384. The helical transmembrane segment at 422–442 (ICFWSTEFFISTLFLHLIGFP) threads the bilayer. Residues 443 to 482 (THEHIRGEGCPLPHRLNSMGGCRCGKYLPLKKPTIWHRRH) are Cytoplasmic-facing. Residues H444, H446, C452, H456, C464, C466, and H482 each contribute to the Zn(2+) site.

Belongs to the arenaviridae GPC protein family. As to quaternary structure, homotetramer; disulfide-linked. Homotetramer. GP2 homotetramers bind through ionic interactions with GP1 homotetramers to form the GP complex together with the stable signal peptide. The GP-C polyprotein interacts with the host protease MBTPS1/SKI-1 resulting in the polyprotein processing. Post-translationally, specific enzymatic cleavages in vivo yield mature proteins. GP-C polyprotein is cleaved in the endoplasmic reticulum by the host protease MBTPS1. Only cleaved glycoprotein is incorporated into virions. In terms of processing, the SSP remains stably associated with the GP complex following cleavage by signal peptidase and plays crucial roles in the trafficking of GP through the secretory pathway. Myristoylation is necessary for GP2-mediated fusion activity.

The protein resides in the virion membrane. It localises to the host endoplasmic reticulum membrane. The protein localises to the host Golgi apparatus membrane. Its subcellular location is the host cell membrane. Class I viral fusion protein that directs fusion of viral and host endosomal membranes, leading to delivery of the nucleocapsid into the cytoplasm. Membrane fusion is mediated by irreversible conformational changes induced upon acidification in the endosome. Functionally, stable signal peptide (SSP): cleaved and functions as a signal peptide. In addition, it is also retained as the third component of the GP complex. The SSP is required for efficient glycoprotein expression, post-translational maturation cleavage of GP1 and GP2, glycoprotein transport to the cell surface plasma membrane, formation of infectious virus particles, and acid pH-dependent glycoprotein-mediated cell fusion. In terms of biological role, interacts with the host receptor. The polypeptide is Pre-glycoprotein polyprotein GP complex (Artibeus (neotropical fruit bats)).